The chain runs to 443 residues: Type I restriction enzyme HindI methylase subunit (443 aa).

S-adenosyl-L-methionine contacts are provided by residues 117–122, 146–148, and Glu173; these read QYFTPK and SGG.

The protein belongs to the N(4)/N(6)-methyltransferase family. As to quaternary structure, the type I restriction/modification system is composed of three polypeptides R, M and S; the restriction enzyme has stoichiometry R(2)M(2)S(1) while the methyltransferase is M(2)S(1).

It carries out the reaction a 2'-deoxyadenosine in DNA + S-adenosyl-L-methionine = an N(6)-methyl-2'-deoxyadenosine in DNA + S-adenosyl-L-homocysteine + H(+). Its function is as follows. The subtype gamma methyltransferase (M) subunit of a type I restriction enzyme. The M and S subunits together form a methyltransferase (MTase) that methylates adenosines in the sequence 5'-RAACN(5)TAG-3'. Methylation protects against cleavage by HindI. In the presence of the R subunit the complex can also act as an endonuclease, binding to the same target sequence but cutting the DNA some distance from this site. Whether the DNA is cut or modified depends on the methylation state of the target sequence. When the target site is unmodified, the DNA is cut. When the target site is hemimethylated, the complex acts as a maintenance MTase modifying the DNA so that both strands become methylated. After locating a non-methylated recognition site, the enzyme complex serves as a molecular motor that translocates DNA in an ATP-dependent manner until a collision occurs that triggers cleavage. This Haemophilus influenzae (strain ATCC 51907 / DSM 11121 / KW20 / Rd) protein is Type I restriction enzyme HindI methylase subunit.